The primary structure comprises 219 residues: Phosphatidylserine decarboxylase proenzyme (219 aa).

The active-site Schiff-base intermediate with substrate; via pyruvic acid is the serine 188. Serine 188 carries the pyruvic acid (Ser); by autocatalysis modification.

It belongs to the phosphatidylserine decarboxylase family. PSD-A subfamily. In terms of assembly, heterodimer of a large membrane-associated beta subunit and a small pyruvoyl-containing alpha subunit. It depends on pyruvate as a cofactor. Is synthesized initially as an inactive proenzyme. Formation of the active enzyme involves a self-maturation process in which the active site pyruvoyl group is generated from an internal serine residue via an autocatalytic post-translational modification. Two non-identical subunits are generated from the proenzyme in this reaction, and the pyruvate is formed at the N-terminus of the alpha chain, which is derived from the carboxyl end of the proenzyme. The post-translation cleavage follows an unusual pathway, termed non-hydrolytic serinolysis, in which the side chain hydroxyl group of the serine supplies its oxygen atom to form the C-terminus of the beta chain, while the remainder of the serine residue undergoes an oxidative deamination to produce ammonia and the pyruvoyl prosthetic group on the alpha chain.

It localises to the cell membrane. It catalyses the reaction a 1,2-diacyl-sn-glycero-3-phospho-L-serine + H(+) = a 1,2-diacyl-sn-glycero-3-phosphoethanolamine + CO2. It functions in the pathway phospholipid metabolism; phosphatidylethanolamine biosynthesis; phosphatidylethanolamine from CDP-diacylglycerol: step 2/2. Functionally, catalyzes the formation of phosphatidylethanolamine (PtdEtn) from phosphatidylserine (PtdSer). The polypeptide is Phosphatidylserine decarboxylase proenzyme (Ruegeria pomeroyi (strain ATCC 700808 / DSM 15171 / DSS-3) (Silicibacter pomeroyi)).